The sequence spans 24 residues: L-amino-acid oxidase (24 aa).

Belongs to the flavin monoamine oxidase family. FIG1 subfamily. Homodimer; non-covalently linked. Requires FAD as cofactor. N-glycosylated. Expressed by the venom gland.

It is found in the secreted. The enzyme catalyses an L-alpha-amino acid + O2 + H2O = a 2-oxocarboxylate + H2O2 + NH4(+). Functionally, catalyzes an oxidative deamination of predominantly hydrophobic and aromatic L-amino acids, thus producing hydrogen peroxide that may contribute to the diverse toxic effects of this enzyme. Exhibits diverse biological activities, such as hemorrhage, hemolysis, edema, apoptosis, and antiparasitic activities. This protein has antibacterial activity (against E.coli, S.aureus, and B.dysenteriae), cytotoxic activity, as well as an ability to induce platelet aggregation. Effects of snake L-amino oxidases on platelets are controversial, since they either induce aggregation or inhibit agonist-induced aggregation. These different effects are probably due to different experimental conditions. This chain is L-amino-acid oxidase, found in Protobothrops mucrosquamatus (Taiwan habu).